The sequence spans 468 residues: Protein phosphatase ppm-1.A (468 aa).

The disordered stretch occupies residues 1–23 (MTISRADLQIASSAEPKTHGNLN). Positions 106–381 (RYGMSSMQGW…DNMTMVVVCF (276 aa)) constitute a PPM-type phosphatase domain. 4 residues coordinate Mn(2+): aspartate 145, glycine 146, aspartate 329, and aspartate 372.

Belongs to the PP2C family. The cofactor is Mg(2+). Mn(2+) serves as cofactor. As to expression, expressed in neurons of the nerve ring and motor neurons of the ventral nerve cord.

The protein resides in the synapse. It carries out the reaction O-phospho-L-seryl-[protein] + H2O = L-seryl-[protein] + phosphate. It catalyses the reaction O-phospho-L-threonyl-[protein] + H2O = L-threonyl-[protein] + phosphate. In terms of biological role, probable phosphatase which regulates axon termination in ALM and PLM neurons, and synaptic branch extension and/or stabilization in PLM neurons. Plays a role in synapse formation in GABAergic DD motor neurons probably by dephosphorylating pmk-3 thereby negatively regulating a MAP kinase pathway that includes dlk-1, mkk-4 and pmk-3. The chain is Protein phosphatase ppm-1.A from Caenorhabditis elegans.